The following is a 159-amino-acid chain: 6,7-dimethyl-8-ribityllumazine synthase (159 aa).

5-amino-6-(D-ribitylamino)uracil is bound by residues Trp-26, 58–60 (AIE), and 80–82 (VVI). 85–86 (ET) serves as a coordination point for (2S)-2-hydroxy-3-oxobutyl phosphate. His-88 functions as the Proton donor in the catalytic mechanism. Residue Asn-113 coordinates 5-amino-6-(D-ribitylamino)uracil. Arg-127 provides a ligand contact to (2S)-2-hydroxy-3-oxobutyl phosphate.

Belongs to the DMRL synthase family. As to quaternary structure, homopentamer.

It carries out the reaction (2S)-2-hydroxy-3-oxobutyl phosphate + 5-amino-6-(D-ribitylamino)uracil = 6,7-dimethyl-8-(1-D-ribityl)lumazine + phosphate + 2 H2O + H(+). It participates in cofactor biosynthesis; riboflavin biosynthesis; riboflavin from 2-hydroxy-3-oxobutyl phosphate and 5-amino-6-(D-ribitylamino)uracil: step 1/2. In terms of biological role, catalyzes the formation of 6,7-dimethyl-8-ribityllumazine by condensation of 5-amino-6-(D-ribitylamino)uracil with 3,4-dihydroxy-2-butanone 4-phosphate. This is the penultimate step in the biosynthesis of riboflavin. The polypeptide is 6,7-dimethyl-8-ribityllumazine synthase (Mycolicibacterium gilvum (strain PYR-GCK) (Mycobacterium gilvum (strain PYR-GCK))).